The primary structure comprises 242 residues: E3 ubiquitin-protein ligase ZNRF2 (242 aa).

The disordered stretch occupies residues 1 to 141; sequence MGAKQSGPAA…VGGSPGGPRL (141 aa). A lipid anchor (N-myristoyl glycine) is attached at Gly-2. Phosphoserine occurs at positions 19, 21, and 25. Positions 19–29 are enriched in low complexity; the sequence is SGSDLPSSSSG. A compositionally biased stretch (gly residues) spans 30-41; sequence GANGTAGGGGGA. Positions 59–97 are enriched in low complexity; the sequence is PSASGGAAAAAAAPAAPAAPRSRSLGGAVGSVASGARAA. 5 positions are modified to phosphoserine: Ser-82, Ser-89, Ser-113, Ser-116, and Ser-135. Residues 99 to 118 are compositionally biased toward polar residues; the sequence is SPFSIPNSSSGPYGSQDSVH. Ser-145 carries the post-translational modification Phosphoserine; by MTOR. A phosphoserine mark is found at Ser-151 and Ser-193. The RING-type; atypical zinc-finger motif lies at 199–240; that stretch reads CAICLEELQQGDTIARLPCLCIYHKGCIDEWFEVNRSCPEHP.

In terms of assembly, interacts with UBE2N. Interacts with ZNRF1. Interacts (when phosphorylated) with YWHAE. Post-translationally, phosphorylated; leading to binding to YWHAE. Phosphorylated by MTOR at Ser-145 and dephosphorylated by PP6C. Ser-145 phosphorylation stimulates vesicle-to-cytosol translocation. Highly expressed in the brain, with higher expression during development than in adult. Expressed also in mammary glands, testis, colon and kidney.

The protein resides in the endosome membrane. The protein localises to the lysosome membrane. Its subcellular location is the presynaptic cell membrane. It localises to the cytoplasm. It catalyses the reaction S-ubiquitinyl-[E2 ubiquitin-conjugating enzyme]-L-cysteine + [acceptor protein]-L-lysine = [E2 ubiquitin-conjugating enzyme]-L-cysteine + N(6)-ubiquitinyl-[acceptor protein]-L-lysine.. The protein operates within protein modification; protein ubiquitination. Its function is as follows. E3 ubiquitin-protein ligase that plays a role in the establishment and maintenance of neuronal transmission and plasticity. Ubiquitinates the Na(+)/K(+) ATPase alpha-1 subunit/ATP1A1 and thereby influences its endocytosis and/or degradation. Acts also as a positive regulator of mTORC1 activation by amino acids, which functions upstream of the V-ATPase and of Rag-GTPases. In turn, phosphorylation by mTOR leads to its inhibition via targeting to the cytosol allowing a self-regulating feedback mechanism. This chain is E3 ubiquitin-protein ligase ZNRF2 (ZNRF2), found in Homo sapiens (Human).